A 99-amino-acid chain; its full sequence is NADH-ubiquinone oxidoreductase chain 4L (99 aa).

Transmembrane regions (helical) follow at residues Met4–Ser24, Leu29–Phe49, and Phe63–Ile83.

This sequence belongs to the complex I subunit 4L family.

Its subcellular location is the mitochondrion membrane. It catalyses the reaction a ubiquinone + NADH + 5 H(+)(in) = a ubiquinol + NAD(+) + 4 H(+)(out). Functionally, core subunit of the mitochondrial membrane respiratory chain NADH dehydrogenase (Complex I) that is believed to belong to the minimal assembly required for catalysis. Complex I functions in the transfer of electrons from NADH to the respiratory chain. The immediate electron acceptor for the enzyme is believed to be ubiquinone. The chain is NADH-ubiquinone oxidoreductase chain 4L (mt:ND4L) from Anopheles gambiae (African malaria mosquito).